The sequence spans 209 residues: Ribosomal RNA large subunit methyltransferase E (209 aa).

S-adenosyl-L-methionine is bound by residues Gly63, Trp65, Asp83, Asp99, and Asp124. The active-site Proton acceptor is Lys164. Residues 191–209 (EASRGRSREVYIVATGYKG) form the TRAM domain.

The protein belongs to the class I-like SAM-binding methyltransferase superfamily. RNA methyltransferase RlmE family.

The protein resides in the cytoplasm. It catalyses the reaction uridine(2552) in 23S rRNA + S-adenosyl-L-methionine = 2'-O-methyluridine(2552) in 23S rRNA + S-adenosyl-L-homocysteine + H(+). Specifically methylates the uridine in position 2552 of 23S rRNA at the 2'-O position of the ribose in the fully assembled 50S ribosomal subunit. The chain is Ribosomal RNA large subunit methyltransferase E from Haemophilus influenzae (strain 86-028NP).